The following is a 357-amino-acid chain: 3-isopropylmalate dehydrogenase (357 aa).

4 residues coordinate substrate: arginine 97, arginine 107, arginine 135, and aspartate 224. Mg(2+) contacts are provided by aspartate 224, aspartate 248, and aspartate 252. Residue 282-294 (GSAPDIAGQDKAN) coordinates NAD(+).

Belongs to the isocitrate and isopropylmalate dehydrogenases family. LeuB type 1 subfamily. In terms of assembly, homodimer. Requires Mg(2+) as cofactor. Mn(2+) is required as a cofactor.

It is found in the cytoplasm. The catalysed reaction is (2R,3S)-3-isopropylmalate + NAD(+) = 4-methyl-2-oxopentanoate + CO2 + NADH. Its pathway is amino-acid biosynthesis; L-leucine biosynthesis; L-leucine from 3-methyl-2-oxobutanoate: step 3/4. Functionally, catalyzes the oxidation of 3-carboxy-2-hydroxy-4-methylpentanoate (3-isopropylmalate) to 3-carboxy-4-methyl-2-oxopentanoate. The product decarboxylates to 4-methyl-2 oxopentanoate. The polypeptide is 3-isopropylmalate dehydrogenase (Synechococcus sp. (strain CC9902)).